Here is a 434-residue protein sequence, read N- to C-terminus: Glutamate-1-semialdehyde 2,1-aminomutase 1 (434 aa).

Residue Lys-270 is modified to N6-(pyridoxal phosphate)lysine.

Belongs to the class-III pyridoxal-phosphate-dependent aminotransferase family. HemL subfamily. Homodimer. Pyridoxal 5'-phosphate is required as a cofactor.

It is found in the cytoplasm. The catalysed reaction is (S)-4-amino-5-oxopentanoate = 5-aminolevulinate. It participates in porphyrin-containing compound metabolism; protoporphyrin-IX biosynthesis; 5-aminolevulinate from L-glutamyl-tRNA(Glu): step 2/2. This chain is Glutamate-1-semialdehyde 2,1-aminomutase 1, found in Bacillus anthracis (strain CDC 684 / NRRL 3495).